We begin with the raw amino-acid sequence, 377 residues long: Erythronate-4-phosphate dehydrogenase (377 aa).

Substrate-binding residues include Ser-45 and Thr-66. Residues Asp-146 and Thr-175 each contribute to the NAD(+) site. Arg-208 is a catalytic residue. Asp-232 contacts NAD(+). Glu-237 is a catalytic residue. The Proton donor role is filled by His-254. Gly-257 provides a ligand contact to NAD(+). Tyr-258 contributes to the substrate binding site.

This sequence belongs to the D-isomer specific 2-hydroxyacid dehydrogenase family. PdxB subfamily. As to quaternary structure, homodimer.

It is found in the cytoplasm. It carries out the reaction 4-phospho-D-erythronate + NAD(+) = (R)-3-hydroxy-2-oxo-4-phosphooxybutanoate + NADH + H(+). It participates in cofactor biosynthesis; pyridoxine 5'-phosphate biosynthesis; pyridoxine 5'-phosphate from D-erythrose 4-phosphate: step 2/5. Catalyzes the oxidation of erythronate-4-phosphate to 3-hydroxy-2-oxo-4-phosphonooxybutanoate. This is Erythronate-4-phosphate dehydrogenase from Sodalis glossinidius (strain morsitans).